The chain runs to 166 residues: NAD(P)H-quinone oxidoreductase subunit I, chloroplastic (166 aa).

4Fe-4S ferredoxin-type domains follow at residues 55–84 (GRIH…VDWK) and 95–124 (LNYS…MTEE). [4Fe-4S] cluster contacts are provided by Cys-64, Cys-67, Cys-70, Cys-74, Cys-104, Cys-107, Cys-110, and Cys-114.

The protein belongs to the complex I 23 kDa subunit family. In terms of assembly, NDH is composed of at least 16 different subunits, 5 of which are encoded in the nucleus. [4Fe-4S] cluster serves as cofactor.

The protein resides in the plastid. The protein localises to the chloroplast thylakoid membrane. It catalyses the reaction a plastoquinone + NADH + (n+1) H(+)(in) = a plastoquinol + NAD(+) + n H(+)(out). The catalysed reaction is a plastoquinone + NADPH + (n+1) H(+)(in) = a plastoquinol + NADP(+) + n H(+)(out). In terms of biological role, NDH shuttles electrons from NAD(P)H:plastoquinone, via FMN and iron-sulfur (Fe-S) centers, to quinones in the photosynthetic chain and possibly in a chloroplast respiratory chain. The immediate electron acceptor for the enzyme in this species is believed to be plastoquinone. Couples the redox reaction to proton translocation, and thus conserves the redox energy in a proton gradient. The protein is NAD(P)H-quinone oxidoreductase subunit I, chloroplastic of Lasianthaea macrocephala (Lipochaeta macrocephala).